We begin with the raw amino-acid sequence, 378 residues long: uncharacterized protein (378 aa).

Over residues 150–176 (TTTATTSNNRFNNNNSNNNNINNNNDN) the composition is skewed to low complexity. The tract at residues 150–187 (TTTATTSNNRFNNNNSNNNNINNNNDNNNKEQKKESRC) is disordered. Basic and acidic residues predominate over residues 177-187 (NNKEQKKESRC).

This is an uncharacterized protein from Dictyostelium discoideum (Social amoeba).